A 315-amino-acid polypeptide reads, in one-letter code: Olfactory receptor 3A10 (315 aa).

Over 1–28 the chain is Extracellular; it reads MEPGAWGNRTAVTDFILLGLTGNVRLQP. Asn-8 carries N-linked (GlcNAc...) asparagine glycosylation. The helical transmembrane segment at 29 to 49 threads the bilayer; the sequence is ILFVVFFFAYIVTVGGNLSIL. Topologically, residues 50–68 are cytoplasmic; that stretch reads AAIFVEPKLHTPMYYFLGN. The chain crosses the membrane as a helical span at residues 69-89; sequence LSLLDIGCISVTVPPMLVCLL. Residues 90–97 are Extracellular-facing; sequence AHECRVPY. A helical membrane pass occupies residues 98-118; the sequence is AACISQLFFFHLLAGVDCHLL. Cys-100 and Cys-192 are joined by a disulfide. The Cytoplasmic segment spans residues 119–145; it reads TAMAYDRYLAICQPLTYSTRMSREVQG. A helical membrane pass occupies residues 146 to 166; the sequence is TLVGICCTVSFINALTHTVAV. Residues 167–200 lie on the Extracellular side of the membrane; sequence SVLDFCGPNVVNHFYCDLPPLFQLSCSSIYLNGQ. A helical transmembrane segment spans residues 201-221; that stretch reads LLFVGATFMGVVPMILISVSY. The Cytoplasmic portion of the chain corresponds to 222 to 239; that stretch reads AHVAAAVLRIRSTEGRKK. The chain crosses the membrane as a helical span at residues 240-260; the sequence is AFSTCGSHLTVVCIFYGTGFF. The Extracellular portion of the chain corresponds to 261–274; sequence SYMRLGSVSASDKD. The chain crosses the membrane as a helical span at residues 275–295; sequence KGIGILNTILSPMLNPLIYSL. Over 296–315 the chain is Cytoplasmic; the sequence is RNPDVQGALKRVLTGKRYPV.

This sequence belongs to the G-protein coupled receptor 1 family.

The protein resides in the cell membrane. Its function is as follows. Odorant receptor. This Mus musculus (Mouse) protein is Olfactory receptor 3A10.